Consider the following 203-residue polypeptide: Small ribosomal subunit protein uS4 (203 aa).

Positions 93 to 154 constitute an S4 RNA-binding domain; the sequence is RRLDNVVYRC…KSRNLDAVAD (62 aa).

Belongs to the universal ribosomal protein uS4 family. As to quaternary structure, part of the 30S ribosomal subunit. Contacts protein S5. The interaction surface between S4 and S5 is involved in control of translational fidelity.

One of the primary rRNA binding proteins, it binds directly to 16S rRNA where it nucleates assembly of the body of the 30S subunit. In terms of biological role, with S5 and S12 plays an important role in translational accuracy. The polypeptide is Small ribosomal subunit protein uS4 (Chlorobaculum tepidum (strain ATCC 49652 / DSM 12025 / NBRC 103806 / TLS) (Chlorobium tepidum)).